A 424-amino-acid polypeptide reads, in one-letter code: WD-40 repeat-containing protein MSI3 (424 aa).

At Met1 the chain carries N-acetylmethionine. WD repeat units follow at residues 167–207, 216–256, 259–299, 303–343, and 362–402; these read GHEQ…TDKV, GHQS…MQHQ, VHER…APLH, KHEG…DEQL, and GHKA…YRED. A DWD box motif is present at residues 233–249; that stretch reads IFGSAGDDCQLVIWDLR. The interval 394-424 is disordered; sequence MAESIYREDDEDEDDDDEGNQNAQHSNENQK. Acidic residues predominate over residues 401 to 412; that stretch reads EDDEDEDDDDEG. The segment covering 413 to 424 has biased composition (polar residues); sequence NQNAQHSNENQK.

It belongs to the WD repeat RBAP46/RBAP48/MSI1 family.

It localises to the nucleus. In terms of biological role, core histone-binding subunit that may target chromatin assembly factors, chromatin remodeling factors and histone deacetylases to their histone substrates in a manner that is regulated by nucleosomal DNA. The polypeptide is WD-40 repeat-containing protein MSI3 (MSI3) (Arabidopsis thaliana (Mouse-ear cress)).